Here is a 126-residue protein sequence, read N- to C-terminus: Lymphocyte antigen 6 complex locus protein G6c (126 aa).

Residues 1–19 (MKHLLLLTLSALLYCWVSA) form the signal peptide. One can recognise a UPAR/Ly6 domain in the interval 21 to 112 (TRCHSCYKVP…PRPTPALALI (92 aa)). Intrachain disulfides connect Cys-23–Cys-48, Cys-26–Cys-34, and Cys-40–Cys-66. Residue Asn-89 is glycosylated (N-linked (GlcNAc...) (high mannose) asparagine). A disulfide bridge connects residues Cys-93 and Cys-98. Ser-100 carries GPI-anchor amidated serine lipidation. Positions 101 to 126 (PAPRPTPALALISLTSLAGLGLWLLH) are cleaved as a propeptide — removed in mature form.

In terms of assembly, monomer. N-glycosylated. As to expression, highly expressed at the leading edges of cells, on filopodia.

The protein resides in the cell membrane. The polypeptide is Lymphocyte antigen 6 complex locus protein G6c (Ly6g6c) (Mus musculus (Mouse)).